The following is an 867-amino-acid chain: MSGRGNLLSLFNKNAGNMGKSISSKDHEIDSGLDFNNSESSGERLLSSHNIETDLITTLQHVNISVGRGRARLIDTLKTDDHTSNQFITSESKENITKKTKGPESEAIASENGLFFPDLIYGSKGSSVNIYCNYLKLTTDESKGVFNYEVRFFPPIDSVHLRIKYLNDHKDKLGGTKTFDGNTLYLPILLPNKMTVFISKAEDVELQIRILYKKKEEMRNCTQLYNILFDRVMKVLNYVKFDRKQFDPSRPKIIPLAKLEVWPGYVTAVDEYKGGLMLCCDVSHRILCQKTVLEMLVDLYQQNVEHYQESARKMLVGNIVLTRYNNRTYKINDICFDQNPTCQFEIKTGCTSYVEYYKQYHNINIKDVNQPLIYSIKKSRGIPAERENLQFCLIPELCYLTGLRDEVRSDNKLMREIATFTRVSPNQRQMALNKFYENVSNTPAAQEILNSWGLSLTNNSNKISGRQMDIEQIYFSKISVSAGRSAEFSKHAVTNEMLKVVHLSKWIIIHLRNYRQAATSLLDNMKQACESLGMNISNPTMISLDHDRIDAYIQALRRNITMNTQMVVCICHNRRDDRYAAIKKICCSEIPIPSQVINAKTLQNDLKIRSVVQKIVLQMNCKLGGSLWTVKIPFKNVMICGIDSYHDPSNRGNSVAAFVASINSSYSQWYSKAVVQTKREEIVNGLSASFEIALKMYRKRNGKLPTNIIIYRDGIGDGQLYTCLNYEIPQFEMVCGNRIKISYIVVQKRINTRIFSGSGIHLENPLPGTVVDQHITKSNMYDFFLVSQLVRQGTVTPTHYVVLRDDCNYGPDIIQKLSYKLCFLYYNWAGTVRIPACCMYAHKLAYLIGQSIQRDVAEALSEKLFYL.

A necessary and sufficient for interaction with krimp region spans residues 1–83 (MSGRGNLLSL…IDTLKTDDHT (83 aa)). The interaction with papi stretch occupies residues 1–289 (MSGRGNLLSL…CDVSHRILCQ (289 aa)). Arg4, Arg68, and Arg70 each carry symmetric dimethylarginine. The 112-residue stretch at 291–402 (TVLEMLVDLY…LIPELCYLTG (112 aa)) folds into the PAZ domain. Positions 566-853 (MVVCICHNRR…LAYLIGQSIQ (288 aa)) constitute a Piwi domain.

This sequence belongs to the argonaute family. Piwi subfamily. In terms of assembly, component of the ping-pong piRNA processing (4P) complex consisting of krimp, aub and AGO3. Interacts (via N-terminus when not methylated on arginine residues) with krimp (via non-canonical tudor domain); this interaction leads to symmetrical dimethylation on AGO3 arginine residues and its subsequent dissociation from krimp. Krimp associated AGO3 is mostly free of piRNA binding and the interaction plays an important role in the loading of AGO3 with piRNAs; piRNA binding may stimulate dissociation of the two proteins. May form part of a piRNA processing complex consisting of tud, aub and AGO3. Interacts (when symmetrically dimethylated on arginine residues) with tud. Forms a complex with smg, twin, aub, nos mRNA and piRNAs that target the nos 3'-untranslated region, in early embryos. Interacts (via the N-terminal region when symmetrically methylated on arginine residues) with papi (via C-terminus); this interaction is RNA-independent and may be required for AGO3 localization to the nuage. Interacts with TER94 and tral. Post-translationally, symmetrically dimethylated on Arg-4, Arg-68 and Arg-70, most likely by csul/PRMT5/DART5. Methylation state probably functions as an indicator of its piRNA binding state. As to expression, in ovary, expressed in germline stem cells, germline cyst cells, nurse cells and oocytes during early stages. Also found in the somatic cap cells of the germarium. In testis, expressed in germline stem cells, primary gonial cells and early spermatocytes. No expression detected in the somatic hub cells at the apical tip of the testis (at protein level). Expressed in neurons throughout the adult brain and in the mushroom body subdivision in the peduncle. In the mushroom body, expressed only in gamma and core alpha-beta neurons.

It is found in the cytoplasm. The protein resides in the perinuclear region. The protein localises to the cytoplasmic ribonucleoprotein granule. In terms of biological role, component of the perinuclear meiotic nuage, a germline-specific subcellular membraneless ribonucleoprotein compartment involved in production of transposable element-repressing Piwi-interacting RNA (piRNA)-induced silencing complexes (piRISCs), which are essential for maintaining germline integrity during oogenesis. Acts via the Piwi-interacting RNA (piRNA) metabolic process, which mediates the repression of transposable elements during meiosis by forming complexes composed of piRNAs and Piwi proteins and governs the methylation and subsequent repression of transposons. Piwi protein that directly binds piRNAs, a class of 24 to 30 nucleotide RNAs that are generated by a Dicer-independent mechanism and are primarily derived from transposons and other repeated sequence elements. Associates predominantly with sense piRNAs that contain adenine at nucleotide 10, but shows no preference for uridine at the 5' end. Shows RNA cleavage or slicer activity. Together with Piwi protein aub recruited to subregions of the perinuclear nuage by krimp, which coordinates their activity in the ping-pong amplification step of secondary piRNA biogenesis. Krimp recruits piRNA bound aub and unbound AGO3, bringing them into close proximity to facilitate the loading onto AGO3 of freshly cut piRNAs generated by aub cleavage of target sequences; krimp recognizes the piRNA loading state of the Piwi proteins via symmetrically dimethylated arginine modification in their N-terminus. Important for asymmetric ping-pong amplification to bias production towards antisense piRNAs capable of silencing transposable elements. In testis, associates with Su(Ste) and AT-chX-1 piRNAs mostly produced from antisense precursors. In the germline, acts to amplify pools of antisense piRNAs, among others Su(Ste), AT-chX-1 and roo, and to limit sense piRNA accumulation. Forms a complex with smg, twin, aub and specific piRNAs that targets nos mRNA (and probably other maternal mRNAS) for deadenylation promoting its decay during early embryogenesis. Involved in transposon silencing in the adult brain. This chain is Protein argonaute-3, found in Drosophila melanogaster (Fruit fly).